We begin with the raw amino-acid sequence, 173 residues long: MAETTVEQPVEETEVVDIESYTTESEVPVEGEYTSESVASRFGEPQPAAGLGRRKNAIARVRIVPGTGKWKINGRTLEDYFPNKVHQQEVNEPFKVLELEGRYDVIARISGGGVSGQAGALRLGVARALNEADVDNNRGALKKAGFLKRDDRAVERKKAGLKKARKAPQYSKR.

Residues 20–53 form a disordered region; sequence SYTTESEVPVEGEYTSESVASRFGEPQPAAGLGR.

This sequence belongs to the universal ribosomal protein uS9 family.

The chain is Small ribosomal subunit protein uS9 from Streptomyces avermitilis (strain ATCC 31267 / DSM 46492 / JCM 5070 / NBRC 14893 / NCIMB 12804 / NRRL 8165 / MA-4680).